Here is a 79-residue protein sequence, read N- to C-terminus: Reactive oxygen species modulator 1 (79 aa).

Residues 22-44 (GFVMGCAVGMAAGALFGTFSCLR) traverse the membrane as a helical segment. The segment at 42–60 (CLRIGMRGRELMGGIGKTM) is sufficient for antibacterial activity.

The protein belongs to the MGR2 family.

It is found in the mitochondrion inner membrane. Functionally, has antibacterial activity against a variety of bacteria including S.aureus, P.aeruginosa and M.tuberculosis. Acts by inducing bacterial membrane breakage. In terms of biological role, induces production of reactive oxygen species (ROS) which are necessary for cell proliferation. May play a role in inducing oxidative DNA damage and replicative senescence. May play a role in the coordination of mitochondrial morphology and cell proliferation. This is Reactive oxygen species modulator 1 (ROMO1) from Bos taurus (Bovine).